A 75-amino-acid chain; its full sequence is Cytochrome c oxidase assembly factor 5 (75 aa).

Positions 28-66 constitute a CHCH domain; sequence QSDCVLQEGKSPKECLKEGYCKALQVTFFECKRSILDNR. Positions 31–42 match the Cx10C motif motif; sequence CVLQEGKSPKEC. Disulfide bonds link Cys31/Cys58 and Cys42/Cys48. The Cx9C motif signature appears at 48 to 58; that stretch reads CKALQVTFFEC.

It belongs to the PET191 family.

Involved in an early step of the mitochondrial complex IV assembly process. The protein is Cytochrome c oxidase assembly factor 5 (coa5) of Xenopus laevis (African clawed frog).